A 191-amino-acid chain; its full sequence is Elongation factor P (191 aa).

It belongs to the elongation factor P family.

The protein localises to the cytoplasm. The protein operates within protein biosynthesis; polypeptide chain elongation. In terms of biological role, involved in peptide bond synthesis. Stimulates efficient translation and peptide-bond synthesis on native or reconstituted 70S ribosomes in vitro. Probably functions indirectly by altering the affinity of the ribosome for aminoacyl-tRNA, thus increasing their reactivity as acceptors for peptidyl transferase. This chain is Elongation factor P, found in Bartonella tribocorum (strain CIP 105476 / IBS 506).